A 544-amino-acid chain; its full sequence is CTP synthase (544 aa).

Positions 1–267 are amidoligase domain; the sequence is MAKFVFITGG…CREVLDVLDL (267 aa). Serine 13 is a CTP binding site. Serine 13 contributes to the UTP binding site. Residues 14–19 and aspartate 71 each bind ATP; that span reads SIGKGI. 2 residues coordinate Mg(2+): aspartate 71 and glutamate 141. CTP is bound by residues 148–150, 188–193, and lysine 224; these read DIE and KTKPTQ. UTP is bound by residues 188 to 193 and lysine 224; that span reads KTKPTQ. Residues 292 to 534 form the Glutamine amidotransferase type-1 domain; that stretch reads KVALVGKYIQ…IEAAQQRLPS (243 aa). Residue glycine 354 coordinates L-glutamine. Cysteine 381 acts as the Nucleophile; for glutamine hydrolysis in catalysis. L-glutamine is bound by residues 382-385, glutamate 405, and arginine 462; that span reads LGMQ. Active-site residues include histidine 507 and glutamate 509.

The protein belongs to the CTP synthase family. In terms of assembly, homotetramer.

The enzyme catalyses UTP + L-glutamine + ATP + H2O = CTP + L-glutamate + ADP + phosphate + 2 H(+). The catalysed reaction is L-glutamine + H2O = L-glutamate + NH4(+). It catalyses the reaction UTP + NH4(+) + ATP = CTP + ADP + phosphate + 2 H(+). Its pathway is pyrimidine metabolism; CTP biosynthesis via de novo pathway; CTP from UDP: step 2/2. With respect to regulation, allosterically activated by GTP, when glutamine is the substrate; GTP has no effect on the reaction when ammonia is the substrate. The allosteric effector GTP functions by stabilizing the protein conformation that binds the tetrahedral intermediate(s) formed during glutamine hydrolysis. Inhibited by the product CTP, via allosteric rather than competitive inhibition. Functionally, catalyzes the ATP-dependent amination of UTP to CTP with either L-glutamine or ammonia as the source of nitrogen. Regulates intracellular CTP levels through interactions with the four ribonucleotide triphosphates. This Parasynechococcus marenigrum (strain WH8102) protein is CTP synthase.